We begin with the raw amino-acid sequence, 511 residues long: 2,3-bisphosphoglycerate-independent phosphoglycerate mutase (511 aa).

Mn(2+) contacts are provided by aspartate 14 and serine 64. The active-site Phosphoserine intermediate is serine 64. Residues histidine 125, 155-156, arginine 187, arginine 193, 259-262, and lysine 333 each bind substrate; these read RD and RADR. Mn(2+) is bound by residues aspartate 400, histidine 404, aspartate 441, histidine 442, and histidine 460.

This sequence belongs to the BPG-independent phosphoglycerate mutase family. In terms of assembly, monomer. Requires Mn(2+) as cofactor.

The catalysed reaction is (2R)-2-phosphoglycerate = (2R)-3-phosphoglycerate. It functions in the pathway carbohydrate degradation; glycolysis; pyruvate from D-glyceraldehyde 3-phosphate: step 3/5. Functionally, catalyzes the interconversion of 2-phosphoglycerate and 3-phosphoglycerate. The polypeptide is 2,3-bisphosphoglycerate-independent phosphoglycerate mutase (Pseudomonas putida (strain ATCC 47054 / DSM 6125 / CFBP 8728 / NCIMB 11950 / KT2440)).